Here is a 261-residue protein sequence, read N- to C-terminus: Imidazole glycerol phosphate synthase subunit HisF (261 aa).

Residues aspartate 11 and aspartate 130 contribute to the active site.

Belongs to the HisA/HisF family. As to quaternary structure, heterodimer of HisH and HisF.

The protein resides in the cytoplasm. The catalysed reaction is 5-[(5-phospho-1-deoxy-D-ribulos-1-ylimino)methylamino]-1-(5-phospho-beta-D-ribosyl)imidazole-4-carboxamide + L-glutamine = D-erythro-1-(imidazol-4-yl)glycerol 3-phosphate + 5-amino-1-(5-phospho-beta-D-ribosyl)imidazole-4-carboxamide + L-glutamate + H(+). Its pathway is amino-acid biosynthesis; L-histidine biosynthesis; L-histidine from 5-phospho-alpha-D-ribose 1-diphosphate: step 5/9. Its function is as follows. IGPS catalyzes the conversion of PRFAR and glutamine to IGP, AICAR and glutamate. The HisF subunit catalyzes the cyclization activity that produces IGP and AICAR from PRFAR using the ammonia provided by the HisH subunit. This Heliobacterium mobile (Heliobacillus mobilis) protein is Imidazole glycerol phosphate synthase subunit HisF.